The sequence spans 1342 residues: DNA-directed RNA polymerase subunit beta (1342 aa).

Belongs to the RNA polymerase beta chain family. As to quaternary structure, the RNAP catalytic core consists of 2 alpha, 1 beta, 1 beta' and 1 omega subunit. When a sigma factor is associated with the core the holoenzyme is formed, which can initiate transcription.

The enzyme catalyses RNA(n) + a ribonucleoside 5'-triphosphate = RNA(n+1) + diphosphate. In terms of biological role, DNA-dependent RNA polymerase catalyzes the transcription of DNA into RNA using the four ribonucleoside triphosphates as substrates. This is DNA-directed RNA polymerase subunit beta from Klebsiella pneumoniae subsp. pneumoniae (strain ATCC 700721 / MGH 78578).